The primary structure comprises 1407 residues: YEATS domain-containing protein 2 (1407 aa).

A Glycyl lysine isopeptide (Lys-Gly) (interchain with G-Cter in SUMO2) cross-link involves residue Lys-9. Positions Met-54–Ala-80 form a coiled coil. Residue Lys-113 forms a Glycyl lysine isopeptide (Lys-Gly) (interchain with G-Cter in SUMO2) linkage. The disordered stretch occupies residues Leu-116–Asp-196. A phosphoserine mark is found at Ser-118, Ser-120, and Ser-157. The segment covering Pro-119–Asp-148 has biased composition (polar residues). The span at Phe-149–Pro-165 shows a compositional bias: basic and acidic residues. Residue Lys-189 forms a Glycyl lysine isopeptide (Lys-Gly) (interchain with G-Cter in SUMO2) linkage. In terms of domain architecture, YEATS spans Glu-201–Glu-346. Histone H3K27cr binding regions lie at residues His-260 to Ser-262 and Trp-283 to Glu-285. At Thr-406 the chain carries Phosphothreonine. Phosphoserine is present on residues Ser-446, Ser-462, Ser-464, Ser-470, and Ser-472. The segment at Ser-462–His-540 is disordered. Thr-477 bears the Phosphothreonine mark. Residue Lys-486 forms a Glycyl lysine isopeptide (Lys-Gly) (interchain with G-Cter in SUMO2) linkage. Positions Ser-511–Ser-520 are enriched in low complexity. Position 534 is a phosphoserine (Ser-534). A Glycyl lysine isopeptide (Lys-Gly) (interchain with G-Cter in SUMO2) cross-link involves residue Lys-550. Ser-573 is subject to Phosphoserine. Residue Lys-590 forms a Glycyl lysine isopeptide (Lys-Gly) (interchain with G-Cter in SUMO2) linkage. A Phosphoserine modification is found at Ser-625. Glycyl lysine isopeptide (Lys-Gly) (interchain with G-Cter in SUMO2) cross-links involve residues Lys-647 and Lys-771. Residues Ser-791–Thr-833 form a disordered region. The segment covering Ala-795 to Pro-829 has biased composition (gly residues). Residue Lys-908 forms a Glycyl lysine isopeptide (Lys-Gly) (interchain with G-Cter in SUMO2) linkage. Residue Lys-1095 forms a Glycyl lysine isopeptide (Lys-Gly) (interchain with G-Cter in SUMO1); alternate linkage. Lys-1095 participates in a covalent cross-link: Glycyl lysine isopeptide (Lys-Gly) (interchain with G-Cter in SUMO2); alternate. Lys-1115 is covalently cross-linked (Glycyl lysine isopeptide (Lys-Gly) (interchain with G-Cter in SUMO2)). Position 1204 is a phosphothreonine (Thr-1204). Residues Lys-1207 and Lys-1270 each participate in a glycyl lysine isopeptide (Lys-Gly) (interchain with G-Cter in SUMO2) cross-link.

In terms of assembly, component of the ADA2A-containing complex (ATAC), composed of KAT14, KAT2A, TADA2L, TADA3L, ZZ3, MBIP, WDR5, YEATS2, SGF29 and DR1.

It localises to the nucleus. Chromatin reader component of the ATAC complex, a complex with histone acetyltransferase activity on histones H3 and H4. YEATS2 specifically recognizes and binds histone H3 crotonylated at 'Lys-27' (H3K27cr). Crotonylation marks active promoters and enhancers and confers resistance to transcriptional repressors. The chain is YEATS domain-containing protein 2 from Mus musculus (Mouse).